The chain runs to 385 residues: Transcription termination factor 2, mitochondrial (385 aa).

The N-terminal 35 residues, 1–35 (MSWRLLTGYQLCRLRLFRKPQPALKIRPSSVCVTY), are a transit peptide targeting the mitochondrion.

This sequence belongs to the mTERF family. Monomer.

The protein localises to the mitochondrion matrix. It is found in the mitochondrion nucleoid. Functionally, binds mitochondrial DNA and plays a role in the regulation of transcription of mitochondrial mRNA and rRNA species. In Rattus norvegicus (Rat), this protein is Transcription termination factor 2, mitochondrial (Mterf2).